The following is a 209-amino-acid chain: Thiamine-phosphate synthase 1 (209 aa).

Residues 39–43 and N74 each bind 4-amino-2-methyl-5-(diphosphooxymethyl)pyrimidine; that span reads QFREK. Mg(2+) contacts are provided by D75 and D94. 4-amino-2-methyl-5-(diphosphooxymethyl)pyrimidine is bound at residue S112. 138 to 140 contributes to the 2-[(2R,5Z)-2-carboxy-4-methylthiazol-5(2H)-ylidene]ethyl phosphate binding site; sequence TQS. A 4-amino-2-methyl-5-(diphosphooxymethyl)pyrimidine-binding site is contributed by K141. Residues G170 and 190–191 contribute to the 2-[(2R,5Z)-2-carboxy-4-methylthiazol-5(2H)-ylidene]ethyl phosphate site; that span reads IS.

It belongs to the thiamine-phosphate synthase family. The cofactor is Mg(2+).

It carries out the reaction 2-[(2R,5Z)-2-carboxy-4-methylthiazol-5(2H)-ylidene]ethyl phosphate + 4-amino-2-methyl-5-(diphosphooxymethyl)pyrimidine + 2 H(+) = thiamine phosphate + CO2 + diphosphate. It catalyses the reaction 2-(2-carboxy-4-methylthiazol-5-yl)ethyl phosphate + 4-amino-2-methyl-5-(diphosphooxymethyl)pyrimidine + 2 H(+) = thiamine phosphate + CO2 + diphosphate. The enzyme catalyses 4-methyl-5-(2-phosphooxyethyl)-thiazole + 4-amino-2-methyl-5-(diphosphooxymethyl)pyrimidine + H(+) = thiamine phosphate + diphosphate. It functions in the pathway cofactor biosynthesis; thiamine diphosphate biosynthesis; thiamine phosphate from 4-amino-2-methyl-5-diphosphomethylpyrimidine and 4-methyl-5-(2-phosphoethyl)-thiazole: step 1/1. Its function is as follows. Condenses 4-methyl-5-(beta-hydroxyethyl)thiazole monophosphate (THZ-P) and 2-methyl-4-amino-5-hydroxymethyl pyrimidine pyrophosphate (HMP-PP) to form thiamine monophosphate (TMP). The protein is Thiamine-phosphate synthase 1 of Streptococcus pneumoniae serotype 4 (strain ATCC BAA-334 / TIGR4).